A 194-amino-acid polypeptide reads, in one-letter code: Large ribosomal subunit protein bL9 (194 aa).

Over residues 166-184 (AENQAQADEQAGELAAAAA) the composition is skewed to low complexity. A disordered region spans residues 166–194 (AENQAQADEQAGELAAAAAERGDMGGDEE). A compositionally biased stretch (basic and acidic residues) spans 185-194 (ERGDMGGDEE).

It belongs to the bacterial ribosomal protein bL9 family.

Binds to the 23S rRNA. In Hyphomonas neptunium (strain ATCC 15444), this protein is Large ribosomal subunit protein bL9.